A 615-amino-acid polypeptide reads, in one-letter code: tRNA uridine 5-carboxymethylaminomethyl modification enzyme MnmG (615 aa).

Residue 11–16 (GLGHAG) coordinates FAD. 278-292 (GPRYCPSLEDKVVRF) contacts NAD(+).

This sequence belongs to the MnmG family. As to quaternary structure, homodimer. Heterotetramer of two MnmE and two MnmG subunits. It depends on FAD as a cofactor.

It localises to the cytoplasm. Functionally, NAD-binding protein involved in the addition of a carboxymethylaminomethyl (cmnm) group at the wobble position (U34) of certain tRNAs, forming tRNA-cmnm(5)s(2)U34. The protein is tRNA uridine 5-carboxymethylaminomethyl modification enzyme MnmG of Myxococcus xanthus (strain DK1622).